The primary structure comprises 133 residues: Protein Wnt-4 (133 aa).

S1 carries the O-palmitoleoyl serine; by PORCN lipid modification. 2 disulfides stabilise this stretch: C69–C114 and C99–C109. N100 carries N-linked (GlcNAc...) asparagine glycosylation.

This sequence belongs to the Wnt family. Palmitoleoylation is required for efficient binding to frizzled receptors. Depalmitoleoylation leads to Wnt signaling pathway inhibition.

The protein resides in the secreted. The protein localises to the extracellular space. It is found in the extracellular matrix. Its function is as follows. Ligand for members of the frizzled family of seven transmembrane receptors. Plays an important role in embryonic development. This chain is Protein Wnt-4 (WNT-4), found in Strongylocentrotus purpuratus (Purple sea urchin).